The chain runs to 199 residues: Dephospho-CoA kinase (199 aa).

Positions 3 to 199 constitute a DPCK domain; it reads KVGLTGGICS…DLLEFFTLYQ (197 aa). Residue 11–16 participates in ATP binding; sequence CSGKST.

It belongs to the CoaE family.

The protein localises to the cytoplasm. The catalysed reaction is 3'-dephospho-CoA + ATP = ADP + CoA + H(+). It functions in the pathway cofactor biosynthesis; coenzyme A biosynthesis; CoA from (R)-pantothenate: step 5/5. Catalyzes the phosphorylation of the 3'-hydroxyl group of dephosphocoenzyme A to form coenzyme A. The polypeptide is Dephospho-CoA kinase (Clostridium perfringens (strain 13 / Type A)).